A 50-amino-acid chain; its full sequence is Mast cell degranulating peptide (50 aa).

The first 27 residues, 1–27 (MISMLRCTFFFVSVILITSYFVTPTMS), serve as a signal peptide directing secretion. Residue lysine 29 is modified to N6-formyllysine. A disulfide bond links cysteine 30 and cysteine 42. Lysine 44 and lysine 48 each carry N6-formyllysine. An Asparagine amide modification is found at asparagine 49.

As to expression, expressed by the venom gland.

It localises to the secreted. Functionally, potent anti-inflammatory agent. At low concentrations, mediates the degranulation of mast cells thus evoking an inflammatory response. Also acts as a neurotoxin capable of blocking a class of voltage-gated potassium channels. The sequence is that of Mast cell degranulating peptide from Apis cerana cerana (Oriental honeybee).